A 668-amino-acid chain; its full sequence is BTB/POZ domain-containing protein At5g66560 (668 aa).

The BTB domain maps to 21–133; it reads SDIEIEVDDM…CYGVKMDLSA (113 aa). The segment covering 73–84 has biased composition (basic and acidic residues); sequence ETDKKGKGHEIE. A disordered region spans residues 73–98; the sequence is ETDKKGKGHEIEDDKEEEEVEEQEIE. Acidic residues predominate over residues 85–98; the sequence is DDKEEEEVEEQEIE. The NPH3 domain maps to 254 to 530; sequence ELWFEDLTQL…VQVLFFEQLQ (277 aa). At Tyr471 the chain carries Phosphotyrosine.

This sequence belongs to the NPH3 family.

It participates in protein modification; protein ubiquitination. May act as a substrate-specific adapter of an E3 ubiquitin-protein ligase complex (CUL3-RBX1-BTB) which mediates the ubiquitination and subsequent proteasomal degradation of target proteins. This Arabidopsis thaliana (Mouse-ear cress) protein is BTB/POZ domain-containing protein At5g66560.